A 421-amino-acid chain; its full sequence is UDP-N-acetylglucosamine 1-carboxyvinyltransferase (421 aa).

K22–N23 lines the phosphoenolpyruvate pocket. Position 93 (R93) interacts with UDP-N-acetyl-alpha-D-glucosamine. The active-site Proton donor is C117. Position 117 is a 2-(S-cysteinyl)pyruvic acid O-phosphothioketal (C117). UDP-N-acetyl-alpha-D-glucosamine-binding positions include R122–L126, D308, and I330.

Belongs to the EPSP synthase family. MurA subfamily.

It localises to the cytoplasm. The enzyme catalyses phosphoenolpyruvate + UDP-N-acetyl-alpha-D-glucosamine = UDP-N-acetyl-3-O-(1-carboxyvinyl)-alpha-D-glucosamine + phosphate. It participates in cell wall biogenesis; peptidoglycan biosynthesis. Its function is as follows. Cell wall formation. Adds enolpyruvyl to UDP-N-acetylglucosamine. In Pseudomonas savastanoi pv. phaseolicola (strain 1448A / Race 6) (Pseudomonas syringae pv. phaseolicola (strain 1448A / Race 6)), this protein is UDP-N-acetylglucosamine 1-carboxyvinyltransferase.